The sequence spans 335 residues: Proline-rich protein 1 (335 aa).

A signal peptide spans 1-22 (MAITRASFAICILLSLATIATA). 39 tandem repeats follow at residues 30–34 (PPVYT), 35–39 (SPVNK), 40–43 (PTLP), 44–48 (PPVYT), 49–53 (PPVHK), 54–57 (PTLP), 58–62 (PPVYT), 63–67 (PPVHK), 68–71 (PTLS), 72–76 (PPVYT), 77–81 (KPTLP), 82–86 (PPAYT), 87–91 (PPVYN), 92–96 (KPTLP), 97–101 (APVYT), 102–106 (PPVYK), 107–110 (PTLS), 111–115 (PPVYT), 116–120 (KPTLL), 121–125 (PPVFK), 126–130 (PTLSP), 131–135 (PVYTK), 136–139 (PTLS), 140–144 (PTVYK), 145–148 (PTLS), 149–153 (PPVNN), 154–158 (KPSLS), 159–163 (PPVYK), 164–167 (PTLS), 168–172 (PPVYT), 173–177 (KPTLP), 178–182 (PPVYK), 184–189 (SPSYSP), 190–194 (PPPFA), 195–200 (PKPTYT), 201–207 (PPTKPYV), 208–212 (PEIIK), 284–288 (SPVET), and 319–323 (PFYFT). Positions 30–323 (PPVYTSPVNK…LFNVGPFYFT (294 aa)) are 39 X 5 AA approximate repeats.

It belongs to the plant proline-rich protein superfamily. ENOD12 family. In terms of tissue distribution, exclusively expressed in roots, especially in root hairs.

Its subcellular location is the secreted. The protein localises to the cell wall. Functionally, may contribute to cell wall structure in root hairs. The sequence is that of Proline-rich protein 1 (PRP1) from Arabidopsis thaliana (Mouse-ear cress).